The following is a 191-amino-acid chain: HTH-type transcriptional regulator SAR0097 (191 aa).

One can recognise an HTH tetR-type domain in the interval 12–74; it reads AEYNQQIILT…AIMDKKVDQM (63 aa). The H-T-H motif DNA-binding region spans 37–56; sequence KMSDIAKISGVGVGTLYRHF.

The chain is HTH-type transcriptional regulator SAR0097 from Staphylococcus aureus (strain MRSA252).